Reading from the N-terminus, the 128-residue chain is Sulfurtransferase TusD (128 aa).

Residue C78 is the Cysteine persulfide intermediate of the active site.

It belongs to the DsrE/TusD family. As to quaternary structure, heterohexamer, formed by a dimer of trimers. The hexameric TusBCD complex contains 2 copies each of TusB, TusC and TusD. The TusBCD complex interacts with TusE.

The protein resides in the cytoplasm. Functionally, part of a sulfur-relay system required for 2-thiolation of 5-methylaminomethyl-2-thiouridine (mnm(5)s(2)U) at tRNA wobble positions. Accepts sulfur from TusA and transfers it in turn to TusE. This is Sulfurtransferase TusD from Shigella dysenteriae serotype 1 (strain Sd197).